Here is a 290-residue protein sequence, read N- to C-terminus: HTH-type transcriptional regulator BudR (290 aa).

In terms of domain architecture, HTH lysR-type spans 1-58; the sequence is MELRYLRYFVAVAEARNFTRAAHDLGISQPPLSQQIQRLEREIGTPLLRRLTRGVELT. Positions 18 to 37 form a DNA-binding region, H-T-H motif; it reads FTRAAHDLGISQPPLSQQIQ.

It belongs to the LysR transcriptional regulatory family.

Functionally, regulator of the budABC operon for 2,3-butanediol synthesis. The sequence is that of HTH-type transcriptional regulator BudR (budR) from Raoultella terrigena (Klebsiella terrigena).